Consider the following 131-residue polypeptide: Agouti-signaling protein (131 aa).

The N-terminal stretch at 1–20 (MNIFRLLLATLLVSLCFLTA) is a signal peptide. Residue asparagine 38 is glycosylated (N-linked (GlcNAc...) asparagine). The segment at 57–104 (KSKKISRKEAEKKRSSKKKASMKNVARPRPPPPNPCVATRNSCKSPAP) is disordered. Disulfide bonds link cysteine 92/cysteine 107, cysteine 99/cysteine 113, cysteine 106/cysteine 124, cysteine 110/cysteine 131, and cysteine 115/cysteine 122. An Agouti domain is found at 92-131 (CVATRNSCKSPAPACCDPCASCQCRFFRSACTCRVLSPSC).

It is found in the secreted. Involved in the regulation of melanogenesis. The binding of ASP to MC1R precludes alpha-MSH initiated signaling and thus blocks production of cAMP, leading to a down-regulation of eumelanogenesis (brown/black pigment) and thus increasing synthesis of pheomelanin (yellow/red pigment). This Vulpes vulpes (Red fox) protein is Agouti-signaling protein (ASIP).